The sequence spans 316 residues: Metal cation efflux system protein CzcD (316 aa).

At 1 to 16 (MGAGHSHDHPGGNERS) the chain is on the cytoplasmic side. Residues 17-37 (LKIALALTGTFLIAEVVGGVM) traverse the membrane as a helical segment. The Periplasmic segment spans residues 38-46 (TKSLALISD). A helical transmembrane segment spans residues 47–67 (AAHMLTDTVALAIALAAIAIA). Residues 68–81 (KRPADKKRTFGYYR) are Cytoplasmic-facing. The helical transmembrane segment at 82 to 102 (FEILAAAFNALLLFGVAIYIL) threads the bilayer. At 103-114 (YEAYLRLKSPPQ) the chain is on the periplasmic side. Residues 115–135 (IESTGMFVVAVLGLIINLISM) form a helical membrane-spanning segment. The Cytoplasmic segment spans residues 136-151 (RMLSSGQSSSLNVKGA). 2 helical membrane passes run 152–172 (YLEV…AIII) and 174–194 (FTGW…WVLP). Residues 195-316 (RTWILLKSSL…GSKSLAAGGN (122 aa)) are Cytoplasmic-facing.

This sequence belongs to the cation diffusion facilitator (CDF) transporter (TC 2.A.4) family. SLC30A subfamily.

It localises to the cell inner membrane. Efflux is inhibited by FCCP. Functionally, mediates a low-level metal ion resistance, probably by efflux of cations from the cytoplasm into the periplasm. Also mediates resistance to cobalt, cadmium and zinc via regulation of the Czc system. May repress expression of the Czc system by an export of the inducing cations. Binds and transports zinc. Can also bind cobalt, copper and nickel. The sequence is that of Metal cation efflux system protein CzcD (czcD) from Cupriavidus metallidurans (strain ATCC 43123 / DSM 2839 / NBRC 102507 / CH34) (Ralstonia metallidurans).